Consider the following 581-residue polypeptide: Serine/threonine-protein kinase SSN3 (581 aa).

The segment at 34-57 is disordered; the sequence is LWSQQQQQQLLDTKGSASTSKSPM. Residues 48–57 are compositionally biased toward polar residues; sequence GSASTSKSPM. Positions 85 to 475 constitute a Protein kinase domain; it reads YEIIGYIAAG…AIDALEHEYF (391 aa). ATP is bound by residues 91–99 and lysine 195; that span reads IAAGTYGKV. Aspartate 298 serves as the catalytic Proton acceptor.

This sequence belongs to the protein kinase superfamily. CMGC Ser/Thr protein kinase family. CDC2/CDKX subfamily. In terms of assembly, component of the SRB8-11 complex, a regulatory module of the Mediator complex. Mg(2+) is required as a cofactor.

The protein localises to the nucleus. The catalysed reaction is L-seryl-[protein] + ATP = O-phospho-L-seryl-[protein] + ADP + H(+). It carries out the reaction L-threonyl-[protein] + ATP = O-phospho-L-threonyl-[protein] + ADP + H(+). The enzyme catalyses [DNA-directed RNA polymerase] + ATP = phospho-[DNA-directed RNA polymerase] + ADP + H(+). Component of the SRB8-11 complex. The SRB8-11 complex is a regulatory module of the Mediator complex which is itself involved in regulation of basal and activated RNA polymerase II-dependent transcription. The SRB8-11 complex may be involved in the transcriptional repression of a subset of genes regulated by Mediator. It may inhibit the association of the Mediator complex with RNA polymerase II to form the holoenzyme complex. The SRB8-11 complex phosphorylates the C-terminal domain (CTD) of the largest subunit of RNA polymerase II. The chain is Serine/threonine-protein kinase SSN3 (SSN3) from Eremothecium gossypii (strain ATCC 10895 / CBS 109.51 / FGSC 9923 / NRRL Y-1056) (Yeast).